The sequence spans 544 residues: Pyruvate kinase (544 aa).

Residue Arg-31 coordinates substrate. Asn-33 and Asp-61 together coordinate K(+). Residue 33–36 (NSAH) participates in ATP binding. Position 68 (Arg-68) interacts with ATP. Glu-204 is a Mg(2+) binding site. Gly-227, Asp-228, and Thr-260 together coordinate substrate. Asp-228 is a Mg(2+) binding site.

Belongs to the pyruvate kinase family. As to quaternary structure, homotetramer. It depends on Mg(2+) as a cofactor. K(+) is required as a cofactor.

The catalysed reaction is pyruvate + ATP = phosphoenolpyruvate + ADP + H(+). The protein operates within carbohydrate degradation; glycolysis; pyruvate from D-glyceraldehyde 3-phosphate: step 5/5. This is Pyruvate kinase from Thermoplasma acidophilum (strain ATCC 25905 / DSM 1728 / JCM 9062 / NBRC 15155 / AMRC-C165).